Reading from the N-terminus, the 604-residue chain is Putative O-acetyltransferase SAV0974 (604 aa).

The next 11 membrane-spanning stretches (helical) occupy residues 15 to 35 (YMPG…IYHL), 43 to 63 (GFLG…SLLL), 85 to 105 (LLPA…LLKS), 150 to 170 (AIEE…LLTI), 176 to 196 (IGFI…FIYS), 212 to 232 (LQTL…KLKN), 240 to 260 (YVID…FFII), 267 to 287 (IYDG…ASVV), 310 to 330 (YSLY…YVDG), 332 to 352 (IPVY…ELSY), and 377 to 397 (FIRM…LVGA). Catalysis depends on residues serine 459, aspartate 581, and histidine 584.

It belongs to the acyltransferase 3 family.

It localises to the cell membrane. The sequence is that of Putative O-acetyltransferase SAV0974 from Staphylococcus aureus (strain Mu50 / ATCC 700699).